The following is a 363-amino-acid chain: Neutral protease 2 homolog NFIA_102630 (363 aa).

Positions 1–19 are cleaved as a signal peptide; that stretch reads MKVTVLASAILALINGALA. A propeptide spanning residues 20–172 is cleaved from the precursor; the sequence is LPANAPTLDV…PQAIKLLDRR (153 aa). 2 disulfide bridges follow: Cys-178–Cys-250 and Cys-257–Cys-275. Residue His-300 coordinates Zn(2+). The active site involves Glu-301. The Zn(2+) site is built by His-304 and Asp-315.

Belongs to the peptidase M35 family. Zn(2+) is required as a cofactor.

It is found in the secreted. It carries out the reaction Preferential cleavage of bonds with hydrophobic residues in P1'. Also 3-Asn-|-Gln-4 and 8-Gly-|-Ser-9 bonds in insulin B chain.. Its function is as follows. Secreted metalloproteinase that allows assimilation of proteinaceous substrates. Shows high activities on basic nuclear substrates such as histone and protamine. The sequence is that of Neutral protease 2 homolog NFIA_102630 from Neosartorya fischeri (strain ATCC 1020 / DSM 3700 / CBS 544.65 / FGSC A1164 / JCM 1740 / NRRL 181 / WB 181) (Aspergillus fischerianus).